Consider the following 140-residue polypeptide: L-fucose mutarotase (140 aa).

Histidine 22 (proton donor) is an active-site residue. Substrate contacts are provided by residues aspartate 30, arginine 107, and 129–131 (YGN).

Belongs to the RbsD / FucU family. FucU mutarotase subfamily. In terms of assembly, homodecamer.

It localises to the cytoplasm. It carries out the reaction alpha-L-fucose = beta-L-fucose. The protein operates within carbohydrate metabolism; L-fucose metabolism. Involved in the anomeric conversion of L-fucose. This chain is L-fucose mutarotase, found in Klebsiella pneumoniae subsp. pneumoniae (strain ATCC 700721 / MGH 78578).